The following is a 133-amino-acid chain: MGMTSDSIADLLTRIRNALMAEHLYVDVEHSKMREAIVKILKHKGFVAHYLVKEENRKRAMRVFLQYSDDRKPVIHQLKRVSKPSRRVYVSAAKIPYVFGNMGISVLSTSQGVMEGSLARSKNIGGELLCLVW.

It belongs to the universal ribosomal protein uS8 family. As to quaternary structure, part of the 30S ribosomal subunit. Contacts proteins S5 and S12.

Its function is as follows. One of the primary rRNA binding proteins, it binds directly to 16S rRNA central domain where it helps coordinate assembly of the platform of the 30S subunit. The sequence is that of Small ribosomal subunit protein uS8 from Chlamydia pneumoniae (Chlamydophila pneumoniae).